Consider the following 420-residue polypeptide: FLYWCH transcription factor 3 (420 aa).

Residues 87–104 (SSTSPDSQPSSSSSVMSS) show a composition bias toward low complexity. Disordered stretches follow at residues 87-107 (SSTS…STDE) and 119-138 (KINK…YTPR). Polar residues predominate over residues 123-134 (AQRQSSPNSSKP). The FLYWCH-type zinc-finger motif lies at 140-195 (IRERVLFDEHLYVFDKCSYDSKKRFFRCERKNTCPARIHTPFDAERVIHKVQVHNH).

In terms of biological role, probable transcription factor. May bind to the promoters of target genes, including micro-RNA genes, in order to repress expression, and acting redundantly with flh-2. In Caenorhabditis elegans, this protein is FLYWCH transcription factor 3.